Here is a 141-residue protein sequence, read N- to C-terminus: Hemoglobin subunit alpha (141 aa).

In terms of domain architecture, Globin spans 1–141 (VLSDNDKTNV…VSTVLTSKYR (141 aa)). At S3 the chain carries Phosphoserine. K7 carries the N6-succinyllysine modification. T8 is modified (phosphothreonine). Residue K11 is modified to N6-succinyllysine. K16 is subject to N6-acetyllysine; alternate. The residue at position 16 (K16) is an N6-succinyllysine; alternate. Y24 is subject to Phosphotyrosine. Position 35 is a phosphoserine (S35). N6-succinyllysine is present on K40. H58 contacts O2. Heme b is bound at residue H87. S102 carries the post-translational modification Phosphoserine. T108 is modified (phosphothreonine). S124 is subject to Phosphoserine. Residues T134 and T137 each carry the phosphothreonine modification. Position 138 is a phosphoserine (S138).

This sequence belongs to the globin family. Heterotetramer of two alpha chains and two beta chains. As to expression, red blood cells.

Its function is as follows. Involved in oxygen transport from the lung to the various peripheral tissues. Hemopressin acts as an antagonist peptide of the cannabinoid receptor CNR1. Hemopressin-binding efficiently blocks cannabinoid receptor CNR1 and subsequent signaling. The chain is Hemoglobin subunit alpha (HBA) from Loxodonta africana (African elephant).